The following is a 467-amino-acid chain: ATP synthase subunit beta (467 aa).

152 to 159 (GGAGVGKT) serves as a coordination point for ATP.

Belongs to the ATPase alpha/beta chains family. In terms of assembly, F-type ATPases have 2 components, CF(1) - the catalytic core - and CF(0) - the membrane proton channel. CF(1) has five subunits: alpha(3), beta(3), gamma(1), delta(1), epsilon(1). CF(0) has three main subunits: a(1), b(2) and c(9-12). The alpha and beta chains form an alternating ring which encloses part of the gamma chain. CF(1) is attached to CF(0) by a central stalk formed by the gamma and epsilon chains, while a peripheral stalk is formed by the delta and b chains.

It localises to the cell membrane. It catalyses the reaction ATP + H2O + 4 H(+)(in) = ADP + phosphate + 5 H(+)(out). Produces ATP from ADP in the presence of a proton gradient across the membrane. The catalytic sites are hosted primarily by the beta subunits. The polypeptide is ATP synthase subunit beta (Caldicellulosiruptor saccharolyticus (strain ATCC 43494 / DSM 8903 / Tp8T 6331)).